A 520-amino-acid polypeptide reads, in one-letter code: 2-isopropylmalate synthase (520 aa).

Residues Val12–Thr274 form the Pyruvate carboxyltransferase domain. Positions 21, 209, 211, and 245 each coordinate Mn(2+). Positions Lys398 to Ser520 are regulatory domain.

It belongs to the alpha-IPM synthase/homocitrate synthase family. LeuA type 1 subfamily. Homodimer. The cofactor is Mn(2+).

Its subcellular location is the cytoplasm. It carries out the reaction 3-methyl-2-oxobutanoate + acetyl-CoA + H2O = (2S)-2-isopropylmalate + CoA + H(+). Its pathway is amino-acid biosynthesis; L-leucine biosynthesis; L-leucine from 3-methyl-2-oxobutanoate: step 1/4. In terms of biological role, catalyzes the condensation of the acetyl group of acetyl-CoA with 3-methyl-2-oxobutanoate (2-ketoisovalerate) to form 3-carboxy-3-hydroxy-4-methylpentanoate (2-isopropylmalate). This Bradyrhizobium diazoefficiens (strain JCM 10833 / BCRC 13528 / IAM 13628 / NBRC 14792 / USDA 110) protein is 2-isopropylmalate synthase.